Reading from the N-terminus, the 237-residue chain is Ribonuclease PH (237 aa).

Residues Arg-86 and 124–126 (GTR) contribute to the phosphate site.

Belongs to the RNase PH family. Homohexameric ring arranged as a trimer of dimers.

The catalysed reaction is tRNA(n+1) + phosphate = tRNA(n) + a ribonucleoside 5'-diphosphate. Phosphorolytic 3'-5' exoribonuclease that plays an important role in tRNA 3'-end maturation. Removes nucleotide residues following the 3'-CCA terminus of tRNAs; can also add nucleotides to the ends of RNA molecules by using nucleoside diphosphates as substrates, but this may not be physiologically important. Probably plays a role in initiation of 16S rRNA degradation (leading to ribosome degradation) during starvation. The sequence is that of Ribonuclease PH from Beijerinckia indica subsp. indica (strain ATCC 9039 / DSM 1715 / NCIMB 8712).